Here is a 219-residue protein sequence, read N- to C-terminus: Albonoursin synthase (219 aa).

This sequence belongs to the nitroreductase family. In terms of assembly, homomer. The cofactor is FMN. The N-terminus is blocked.

It localises to the cytoplasm. The catalysed reaction is cyclo(L-phenylalanyl-L-leucyl) + 2 O2 = albonoursin + 2 H2O2. Its function is as follows. Involved in the biosynthesis of albonoursin (cyclo[(alpha,beta-dehydro-Phe)-(alpha,beta-dehydro-Leu)]), an antibacterial peptide. Catalyzes the formation of alpha,beta-dehydro-Phe (DPhe) and alpha,beta-dehydro-Leu (DLeu) residues during the biosynthesis of albonoursin. The catalytic reaction of cyclo(L-Phe-L-Leu) occurs in a two-step sequential alpha-beta-dehydrogenation leading first to cyclo(alpha,beta-dehydro-Phe-L-Leu) and finally to albonoursin. Can also use cyclo(L-Phe-L-His), cyclo(L-Trp-L-Trp), cyclo(L-Leu-L-Ala), cyclo(L-Phe-Gly), cyclo(L-Leu-Gly), cyclo(L-Ser-Gly) and cyclo(L-Glu-Gly) as substrate suggesting that the diketopiperazine ring is essential for the enzymatic reaction. This Streptomyces noursei (Streptomyces albulus) protein is Albonoursin synthase (albA).